An 878-amino-acid polypeptide reads, in one-letter code: uncharacterized protein (878 aa).

Disordered stretches follow at residues 58-223 (IGVD…RTKF), 306-494 (KGRL…TSSR), 585-652 (KLLE…SGKL), and 679-709 (PSSMVTIPSPSSSCSSTSSIIGSSSSSGGGG). Low complexity-rich tracts occupy residues 64–213 (NGNS…SGTS), 314–325 (SNSSQSSDSDYS), and 335–355 (IPNSTLSSSSTLPIPSNPNSN). A compositionally biased stretch (polar residues) spans 362 to 372 (RNPNQLSSTNV). Positions 373 to 494 (NNNINNSGGS…TPTTPVTSSR (122 aa)) are enriched in low complexity. The span at 585 to 595 (KLLEQQKEQQQ) shows a compositional bias: basic and acidic residues. The span at 596-605 (KEQQQQQKQQ) shows a compositional bias: low complexity. The span at 615-624 (TDDEDEDDDE) shows a compositional bias: acidic residues. Composition is skewed to low complexity over residues 639–652 (NLSNNSSNKGSGKL) and 679–704 (PSSMVTIPSPSSSCSSTSSIIGSSSS).

This is an uncharacterized protein from Dictyostelium discoideum (Social amoeba).